The primary structure comprises 544 residues: Chaperonin GroEL 2 (544 aa).

Residues 30–33 (TLGP), 87–91 (DGTTT), G415, 480–482 (NAA), and D496 each bind ATP.

This sequence belongs to the chaperonin (HSP60) family. In terms of assembly, forms a cylinder of 14 subunits composed of two heptameric rings stacked back-to-back. Interacts with the co-chaperonin GroES.

Its subcellular location is the cytoplasm. The catalysed reaction is ATP + H2O + a folded polypeptide = ADP + phosphate + an unfolded polypeptide.. Together with its co-chaperonin GroES, plays an essential role in assisting protein folding. The GroEL-GroES system forms a nano-cage that allows encapsulation of the non-native substrate proteins and provides a physical environment optimized to promote and accelerate protein folding. This chain is Chaperonin GroEL 2, found in Albidiferax ferrireducens (strain ATCC BAA-621 / DSM 15236 / T118) (Rhodoferax ferrireducens).